The following is a 277-amino-acid chain: Protein CIMAP1D (277 aa).

3 STPGR repeats span residues 122–148 (PGPG…LGSR), 202–227 (PGPG…ILGR), and 238–263 (PGPG…MGIR). Residues 181-277 (PSYTVVGRTP…ASTMVGDTKC (97 aa)) form a disordered region.

This sequence belongs to the CIMAP family.

The protein is Protein CIMAP1D (Cimap1d) of Mus musculus (Mouse).